A 260-amino-acid polypeptide reads, in one-letter code: Triosephosphate isomerase (260 aa).

Residue 11–13 (NWK) coordinates substrate. The Electrophile role is filled by His103. Residue Glu175 is the Proton acceptor of the active site. Substrate contacts are provided by residues Gly181, Ser220, and 241-242 (GG).

The protein belongs to the triosephosphate isomerase family. As to quaternary structure, homodimer.

The protein resides in the cytoplasm. The enzyme catalyses D-glyceraldehyde 3-phosphate = dihydroxyacetone phosphate. Its pathway is carbohydrate biosynthesis; gluconeogenesis. It functions in the pathway carbohydrate degradation; glycolysis; D-glyceraldehyde 3-phosphate from glycerone phosphate: step 1/1. Its function is as follows. Involved in the gluconeogenesis. Catalyzes stereospecifically the conversion of dihydroxyacetone phosphate (DHAP) to D-glyceraldehyde-3-phosphate (G3P). This is Triosephosphate isomerase from Shewanella frigidimarina (strain NCIMB 400).